A 332-amino-acid chain; its full sequence is Isopentenyl-diphosphate delta-isomerase (332 aa).

Substrate is bound at residue 6–7; the sequence is RK. FMN-binding positions include 65 to 67, S95, and N123; that span reads AMT. Residue 95–97 coordinates substrate; the sequence is SGR. Q157 contributes to the substrate binding site. E158 contributes to the Mg(2+) binding site. Residues K187, T217, 264 to 266, A285, and 285 to 286 each bind FMN; these read GVY and AR.

The protein belongs to the IPP isomerase type 2 family. Homooctamer. Dimer of tetramers. Requires FMN as cofactor. It depends on NADPH as a cofactor. Mg(2+) serves as cofactor.

It localises to the cytoplasm. It catalyses the reaction isopentenyl diphosphate = dimethylallyl diphosphate. With respect to regulation, competitively inhibited by N,N-dimethyl-2-amino-1-ethyl diphosphate (NIPP) and isopentyl diphosphate. In terms of biological role, involved in the biosynthesis of isoprenoids. Catalyzes the 1,3-allylic rearrangement of the homoallylic substrate isopentenyl (IPP) to its allylic isomer, dimethylallyl diphosphate (DMAPP). This is Isopentenyl-diphosphate delta-isomerase from Thermus thermophilus (strain ATCC BAA-163 / DSM 7039 / HB27).